Reading from the N-terminus, the 62-residue chain is Beta-defensin 110 (62 aa).

The first 21 residues, 1–21 (MKIHLFFFILLFWVTILPARS), serve as a signal peptide directing secretion. Cystine bridges form between cysteine 32–cysteine 60, cysteine 39–cysteine 53, and cysteine 43–cysteine 61.

The protein belongs to the beta-defensin family.

The protein localises to the secreted. Has antibacterial activity. This chain is Beta-defensin 110 (DEFB110), found in Canis lupus familiaris (Dog).